The chain runs to 117 residues: MYEFLGILIYFFIALALSLLLLGLPFLVSTRKADPEKISAYECGFDPFDDARGRFDIQFYLVAILFIIFDLEVAFLFPWALTLNKIGYFGFWSMMLFLFILTVGFIYEWRKGALDWS.

Transmembrane regions (helical) follow at residues 4-24 (FLGI…LLGL), 61-81 (LVAI…PWAL), and 86-106 (IGYF…VGFI).

This sequence belongs to the complex I subunit 3 family.

The protein localises to the mitochondrion membrane. The catalysed reaction is a ubiquinone + NADH + 5 H(+)(in) = a ubiquinol + NAD(+) + 4 H(+)(out). Core subunit of the mitochondrial membrane respiratory chain NADH dehydrogenase (Complex I) that is believed to belong to the minimal assembly required for catalysis. Complex I functions in the transfer of electrons from NADH to the respiratory chain. The immediate electron acceptor for the enzyme is believed to be ubiquinone. The chain is NADH-ubiquinone oxidoreductase chain 3 (NAD3) from Prototheca wickerhamii.